The following is a 425-amino-acid chain: Serine--tRNA ligase (425 aa).

L-serine is bound at residue 228-230; that stretch reads TAE. An ATP-binding site is contributed by 259 to 261; it reads RSE. Glutamate 282 is an L-serine binding site. 346–349 provides a ligand contact to ATP; sequence EIAS. Serine 382 contributes to the L-serine binding site.

This sequence belongs to the class-II aminoacyl-tRNA synthetase family. Type-1 seryl-tRNA synthetase subfamily. In terms of assembly, homodimer. The tRNA molecule binds across the dimer.

It localises to the cytoplasm. It carries out the reaction tRNA(Ser) + L-serine + ATP = L-seryl-tRNA(Ser) + AMP + diphosphate + H(+). The catalysed reaction is tRNA(Sec) + L-serine + ATP = L-seryl-tRNA(Sec) + AMP + diphosphate + H(+). The protein operates within aminoacyl-tRNA biosynthesis; selenocysteinyl-tRNA(Sec) biosynthesis; L-seryl-tRNA(Sec) from L-serine and tRNA(Sec): step 1/1. In terms of biological role, catalyzes the attachment of serine to tRNA(Ser). Is also able to aminoacylate tRNA(Sec) with serine, to form the misacylated tRNA L-seryl-tRNA(Sec), which will be further converted into selenocysteinyl-tRNA(Sec). The polypeptide is Serine--tRNA ligase (Rickettsia massiliae (strain Mtu5)).